The sequence spans 350 residues: Inner membrane protein YhiM (350 aa).

Topologically, residues 1–2 (MN) are cytoplasmic. Residues 3-23 (IYIGWLFKLIPLIMGLICIAL) traverse the membrane as a helical segment. Over 24 to 41 (GGFVLESSGQSEYFVAGH) the chain is Periplasmic. The helical transmembrane segment at 42-62 (VLISLAAICLALFTTAFIIIS) threads the bilayer. The Cytoplasmic portion of the chain corresponds to 63-74 (QLTRGVNTFYNT). Residues 75-95 (LFPIIGYAGSIITMIWGWALL) traverse the membrane as a helical segment. Residues 96–104 (AGNDVMADE) lie on the Periplasmic side of the membrane. A helical transmembrane segment spans residues 105–125 (FVAGHVIFGVGMIAACVSTVA). Residues 126–157 (ASSGHFLLIPKNAAGSKSDGTPVQAYSSLIGN) lie on the Cytoplasmic side of the membrane. Residues 158–178 (CLIAVPVLLTLLGFIWSITLL) form a helical membrane-spanning segment. Residues 179–190 (RSADITPHYVAG) are Periplasmic-facing. The helical transmembrane segment at 191 to 211 (HVLLGLTAICACLIGLVATIV) threads the bilayer. Residues 212-225 (HQTRNTFSTKEHWL) are Cytoplasmic-facing. The chain crosses the membrane as a helical span at residues 226-246 (WCYWVIFLGSITVLQGIYVLV). At 247-257 (SSDASARLAPG) the chain is on the periplasmic side. A helical membrane pass occupies residues 258–278 (IILICLGMICYSIFSKVWLLA). Residues 279–290 (LVWRRTCSLANR) lie on the Cytoplasmic side of the membrane. The chain crosses the membrane as a helical span at residues 291–311 (IPMIPVFTCLFCLFLASFLAE). At 312 to 324 (MAQTDMGYFIPSR) the chain is on the periplasmic side. A helical membrane pass occupies residues 325–345 (VLVGLGAVCFTLFSIVSILEA). Residues 346–350 (GSAKK) are Cytoplasmic-facing.

It localises to the cell inner membrane. The protein is Inner membrane protein YhiM (yhiM) of Escherichia coli (strain K12).